Consider the following 94-residue polypeptide: UPF0298 protein SEQ_1830 (94 aa).

The protein belongs to the UPF0298 family.

The protein localises to the cytoplasm. The chain is UPF0298 protein SEQ_1830 from Streptococcus equi subsp. equi (strain 4047).